A 178-amino-acid chain; its full sequence is Large ribosomal subunit protein uL6 (178 aa).

The protein belongs to the universal ribosomal protein uL6 family. Part of the 50S ribosomal subunit.

Functionally, this protein binds to the 23S rRNA, and is important in its secondary structure. It is located near the subunit interface in the base of the L7/L12 stalk, and near the tRNA binding site of the peptidyltransferase center. In Maridesulfovibrio salexigens (strain ATCC 14822 / DSM 2638 / NCIMB 8403 / VKM B-1763) (Desulfovibrio salexigens), this protein is Large ribosomal subunit protein uL6.